The primary structure comprises 339 residues: Senescence-specific cysteine protease SAG39 (339 aa).

The first 23 residues, 1–23 (MAMAKALLFAILGCLCLCSAVLA), serve as a signal peptide directing secretion. Cystine bridges form between Cys144/Cys187, Cys178/Cys220, and Cys276/Cys328. Cys147 is an active-site residue. Residues His282 and Asn303 contribute to the active site.

Belongs to the peptidase C1 family.

It localises to the vacuole. Its function is as follows. Cysteine protease that may have a developmental senescence specific cell death function during apoptosis, heavy metal detoxification, and hypersensitive response. This is Senescence-specific cysteine protease SAG39 from Oryza sativa subsp. indica (Rice).